Consider the following 54-residue polypeptide: uncharacterized protein (54 aa).

Residues 6-26 (ILIYLLIFVAGIVIGKIRINV) traverse the membrane as a helical segment.

It is found in the host membrane. This is an uncharacterized protein from Acidianus convivator (ABV).